The chain runs to 112 residues: K(+)/H(+) antiporter modulator KhtS (112 aa).

The disordered stretch occupies residues 42–64 (YVPMSSYPQETQSAKTPSPGSMH). The segment covering 47 to 60 (SYPQETQSAKTPSP) has biased composition (polar residues).

It localises to the cell membrane. Functionally, modulates the activity of the potassium/proton antiporter KhtU. Involved in protection of the cell from methylglyoxal, a toxic by-product of glycolysis. This chain is K(+)/H(+) antiporter modulator KhtS, found in Bacillus subtilis (strain 168).